A 539-amino-acid chain; its full sequence is Beta-agarase A (539 aa).

A signal peptide spans 1–19 (MKKNYLLLYFIFLLCGSIA). Positions 21–289 (QDWNGIPVPA…WIRVYKPVAV (269 aa)) constitute a GH16 domain. Residues tryptophan 73, 82-92 (NAPQAWTNGSQ), 96-98 (QAQ), and glutamate 144 contribute to the substrate site. The active-site Nucleophile is glutamate 147. The active-site Proton donor is the glutamate 152. Positions 176 and 271 each coordinate substrate. Residues 332–353 (WANTNDIGSRDRGASNGRNNIN) form a disordered region.

It belongs to the glycosyl hydrolase 16 family. Monomer. Proteolytically cleaved into mature beta-agarase A catalytic chain (AgaAc).

The protein localises to the secreted. The enzyme catalyses Hydrolysis of (1-&gt;4)-beta-D-galactosidic linkages in agarose, giving the tetramer as the predominant product.. In terms of biological role, cleaves the beta-1,4-linkages between beta-D-galactose and alpha-L-3,6-anhydro-galactose residues in agarose. Cleaves agarose in a random manner with retention of the anomeric-bond configuration, producing beta-anomers that give rise progressively to alpha-anomers when mutarotation takes place. This Zobellia galactanivorans (strain DSM 12802 / CCUG 47099 / CIP 106680 / NCIMB 13871 / Dsij) protein is Beta-agarase A (agaA).